The primary structure comprises 695 residues: Polyribonucleotide nucleotidyltransferase (695 aa).

Mg(2+) is bound by residues aspartate 486 and aspartate 492. A KH domain is found at 553–612 (PRIETMQINTSKIATVIGPGGKQIRQIIERSGAQVDINDDGVINIAASTQESINKAKELI). Residues 622 to 690 (GKVYNGRVTS…EKGQLKLSHK (69 aa)) enclose the S1 motif domain.

This sequence belongs to the polyribonucleotide nucleotidyltransferase family. The cofactor is Mg(2+).

It localises to the cytoplasm. The enzyme catalyses RNA(n+1) + phosphate = RNA(n) + a ribonucleoside 5'-diphosphate. Its function is as follows. Involved in mRNA degradation. Catalyzes the phosphorolysis of single-stranded polyribonucleotides processively in the 3'- to 5'-direction. The protein is Polyribonucleotide nucleotidyltransferase of Chlamydia trachomatis serovar A (strain ATCC VR-571B / DSM 19440 / HAR-13).